The sequence spans 556 residues: M-phase inducer phosphatase (556 aa).

Disordered regions lie at residues 165–186 (STDG…QERR) and 257–297 (TSGL…RPRK). Residues 287–297 (KSAHPNMRPRK) are compositionally biased toward basic residues. A Rhodanese domain is found at 371-474 (MFDNIMIIDC…FFAEHRSLCY (104 aa)). Cys421 is an active-site residue. Positions 505-516 (RAQTFAFGQQSP) are enriched in polar residues. The segment at 505 to 556 (RAQTFAFGQQSPEMEDSPTGRCRNNPGDRKLLASPFNDSPGSRFPGRRMLSY) is disordered.

It belongs to the MPI phosphatase family.

The enzyme catalyses O-phospho-L-tyrosyl-[protein] + H2O = L-tyrosyl-[protein] + phosphate. Functionally, this protein functions as a dosage-dependent inducer in mitotic control. It is a tyrosine protein phosphatase required for progression of the cell cycle. It may directly dephosphorylate p34(cdc2) and activate the p34(cdc2) kinase activity. This chain is M-phase inducer phosphatase (nimT), found in Emericella nidulans (strain FGSC A4 / ATCC 38163 / CBS 112.46 / NRRL 194 / M139) (Aspergillus nidulans).